The following is an 815-amino-acid chain: Subtilisin-like protease SBT2.5 (815 aa).

The N-terminal stretch at 1-19 (MDIGLRIFVVFVLLVAVTA) is a signal peptide. The Inhibitor I9 domain maps to 21–124 (VYIVTMEGDP…RSVDKDWKVR (104 aa)). In terms of domain architecture, Peptidase S8 spans 120–671 (DWKVRRLTTH…SGHVNPSAAL (552 aa)). Residues Asp160 and His234 each act as charge relay system in the active site. Residues 397–501 (TLVSANDVLL…VSKSMDLIDY (105 aa)) enclose the PA domain. Residues Asn503 and Asn577 are each glycosylated (N-linked (GlcNAc...) asparagine). Ser596 serves as the catalytic Charge relay system. Asn701 carries N-linked (GlcNAc...) asparagine glycosylation.

Belongs to the peptidase S8 family. In terms of tissue distribution, expressed in roots, leaves and flowers of mature plants.

This is Subtilisin-like protease SBT2.5 from Arabidopsis thaliana (Mouse-ear cress).